The following is a 331-amino-acid chain: Ketol-acid reductoisomerase (NADP(+)) (331 aa).

The 181-residue stretch at 2–182 folds into the KARI N-terminal Rossmann domain; it reads AKMYYDKDAD…GGTRAGVIET (181 aa). Residues 25–28, Ser-51, Ser-53, and 83–86 contribute to the NADP(+) site; these read FGSQ and DEKQ. The active site involves His-108. Gly-134 contacts NADP(+). The KARI C-terminal knotted domain maps to 183–328; that stretch reads TFKEETETDL…KGLREMMAWI (146 aa). Asp-191, Glu-195, Glu-227, and Glu-231 together coordinate Mg(2+). Ser-252 is a binding site for substrate.

It belongs to the ketol-acid reductoisomerase family. Mg(2+) serves as cofactor.

The enzyme catalyses (2R)-2,3-dihydroxy-3-methylbutanoate + NADP(+) = (2S)-2-acetolactate + NADPH + H(+). It carries out the reaction (2R,3R)-2,3-dihydroxy-3-methylpentanoate + NADP(+) = (S)-2-ethyl-2-hydroxy-3-oxobutanoate + NADPH + H(+). Its pathway is amino-acid biosynthesis; L-isoleucine biosynthesis; L-isoleucine from 2-oxobutanoate: step 2/4. The protein operates within amino-acid biosynthesis; L-valine biosynthesis; L-valine from pyruvate: step 2/4. Its function is as follows. Involved in the biosynthesis of branched-chain amino acids (BCAA). Catalyzes an alkyl-migration followed by a ketol-acid reduction of (S)-2-acetolactate (S2AL) to yield (R)-2,3-dihydroxy-isovalerate. In the isomerase reaction, S2AL is rearranged via a Mg-dependent methyl migration to produce 3-hydroxy-3-methyl-2-ketobutyrate (HMKB). In the reductase reaction, this 2-ketoacid undergoes a metal-dependent reduction by NADPH to yield (R)-2,3-dihydroxy-isovalerate. This Thermoanaerobacter sp. (strain X514) protein is Ketol-acid reductoisomerase (NADP(+)).